Reading from the N-terminus, the 494-residue chain is DUF21 domain-containing protein At4g14240 (494 aa).

At 1 to 43 (MHLINAVAAARILSGIGQSNGNNGGEAIPFGSFEWITYAGISC) the chain is on the extracellular side. The 183-residue stretch at 31–213 (GSFEWITYAG…GKGGELTHDE (183 aa)) folds into the CNNM transmembrane domain. A helical transmembrane segment spans residues 44-64 (FLVLFAGIMSGLTLGLMSLGL). The Cytoplasmic segment spans residues 65–93 (VELEILQRSGTPNEKKQAAAIFPVVQKQH). Residues 94-114 (QLLVTLLLCNAMAMEGLPIYL) traverse the membrane as a helical segment. The Extracellular portion of the chain corresponds to 115–121 (DKLFNEY). Residues 122-142 (VAIILSVTFVLAFGEVIPQAI) traverse the membrane as a helical segment. Topologically, residues 143–159 (CTRYGLAVGANFVWLVR) are cytoplasmic. The chain crosses the membrane as a helical span at residues 160–180 (ILMTLCYPIAFPIGKILDLVL). The Extracellular portion of the chain corresponds to 181–494 (GHNDALFRRA…TITEPIRRNN (314 aa)). 3 consecutive CBS domains span residues 232–292 (MTPI…TETL), 297–352 (CIRR…SNDS), and 364–425 (GNHD…IVDE). N350 and N385 each carry an N-linked (GlcNAc...) asparagine glycan. The disordered stretch occupies residues 459–494 (QKGTGGQNKQGQTNKVPGQEQDKMLGTITEPIRRNN).

Its subcellular location is the membrane. The sequence is that of DUF21 domain-containing protein At4g14240 (CBSDUF1) from Arabidopsis thaliana (Mouse-ear cress).